Here is a 208-residue protein sequence, read N- to C-terminus: Interleukin-6 (208 aa).

The signal sequence occupies residues 1-29; it reads MNSRFTSAFTPFAVSLGLLLVMTSAFPTP. Residue asparagine 38 is glycosylated (N-linked (GlcNAc...) asparagine). Cysteine 72 and cysteine 78 form a disulfide bridge. The residue at position 81 (serine 81) is a Phosphoserine. Cysteine 101 and cysteine 111 are joined by a disulfide.

It belongs to the IL-6 superfamily. Component of a hexamer of two molecules each of IL6, IL6R and IL6ST; first binds to IL6R to associate with the signaling subunit IL6ST. Interacts with IL6R (via the N-terminal ectodomain); this interaction may be affected by IL6R-binding with SORL1, hence decreasing IL6 cis signaling. Interacts with SORL1 (via the N-terminal ectodomain); this interaction leads to IL6 internalization and lysosomal degradation. May form a trimeric complex with the soluble SORL1 ectodomain and soluble IL6R receptor; this interaction might stabilize circulating IL6, hence promoting IL6 trans signaling.

It is found in the secreted. Cytokine with a wide variety of biological functions in immunity, tissue regeneration, and metabolism. Binds to IL6R, then the complex associates to the signaling subunit IL6ST/gp130 to trigger the intracellular IL6-signaling pathway. The interaction with the membrane-bound IL6R and IL6ST stimulates 'classic signaling', whereas the binding of IL6 and soluble IL6R to IL6ST stimulates 'trans-signaling'. Alternatively, 'cluster signaling' occurs when membrane-bound IL6:IL6R complexes on transmitter cells activate IL6ST receptors on neighboring receiver cells. Functionally, IL6 is a potent inducer of the acute phase response. Rapid production of IL6 contributes to host defense during infection and tissue injury, but excessive IL6 synthesis is involved in disease pathology. In the innate immune response, is synthesized by myeloid cells, such as macrophages and dendritic cells, upon recognition of pathogens through toll-like receptors (TLRs) at the site of infection or tissue injury. In the adaptive immune response, is required for the differentiation of B cells into immunoglobulin-secreting cells. Plays a major role in the differentiation of CD4(+) T cell subsets. Essential factor for the development of T follicular helper (Tfh) cells that are required for the induction of germinal-center formation. Required to drive naive CD4(+) T cells to the Th17 lineage. Also required for proliferation of myeloma cells and the survival of plasmablast cells. Its function is as follows. Acts as an essential factor in bone homeostasis and on vessels directly or indirectly by induction of VEGF, resulting in increased angiogenesis activity and vascular permeability. Induces, through 'trans-signaling' and synergistically with IL1B and TNF, the production of VEGF. Involved in metabolic controls, is discharged into the bloodstream after muscle contraction increasing lipolysis and improving insulin resistance. 'Trans-signaling' in central nervous system also regulates energy and glucose homeostasis. Mediates, through GLP-1, crosstalk between insulin-sensitive tissues, intestinal L cells and pancreatic islets to adapt to changes in insulin demand. Also acts as a myokine. Plays a protective role during liver injury, being required for maintenance of tissue regeneration. Also has a pivotal role in iron metabolism by regulating HAMP/hepcidin expression upon inflammation or bacterial infection. Through activation of IL6ST-YAP-NOTCH pathway, induces inflammation-induced epithelial regeneration. The polypeptide is Interleukin-6 (IL6) (Bos taurus (Bovine)).